The chain runs to 275 residues: Transmembrane protein 202 (275 aa).

4 helical membrane-spanning segments follow: residues 60-80 (SGFS…QFLV), 116-136 (ALFL…LSSC), 151-171 (VSML…LFLA), and 193-213 (WCSE…FITF).

The protein resides in the membrane. The protein is Transmembrane protein 202 (Tmem202) of Mus musculus (Mouse).